The sequence spans 298 residues: Bifunctional protein FolD (298 aa).

NADP(+) is bound by residues 166 to 168 (GRS), Ser191, and Ile232.

The protein belongs to the tetrahydrofolate dehydrogenase/cyclohydrolase family. In terms of assembly, homodimer.

It carries out the reaction (6R)-5,10-methylene-5,6,7,8-tetrahydrofolate + NADP(+) = (6R)-5,10-methenyltetrahydrofolate + NADPH. The enzyme catalyses (6R)-5,10-methenyltetrahydrofolate + H2O = (6R)-10-formyltetrahydrofolate + H(+). It participates in one-carbon metabolism; tetrahydrofolate interconversion. Functionally, catalyzes the oxidation of 5,10-methylenetetrahydrofolate to 5,10-methenyltetrahydrofolate and then the hydrolysis of 5,10-methenyltetrahydrofolate to 10-formyltetrahydrofolate. In Erythrobacter litoralis (strain HTCC2594), this protein is Bifunctional protein FolD.